Consider the following 245-residue polypeptide: DNA polymerase sliding clamp 2 (245 aa).

The protein belongs to the PCNA family. As to quaternary structure, homotrimer. The subunits circularize to form a toroid; DNA passes through its center. Replication factor C (RFC) is required to load the toroid on the DNA.

Functionally, sliding clamp subunit that acts as a moving platform for DNA processing. Responsible for tethering the catalytic subunit of DNA polymerase and other proteins to DNA during high-speed replication. This Sulfolobus acidocaldarius (strain ATCC 33909 / DSM 639 / JCM 8929 / NBRC 15157 / NCIMB 11770) protein is DNA polymerase sliding clamp 2.